The chain runs to 292 residues: Phosphatidylglycerol--prolipoprotein diacylglyceryl transferase (292 aa).

The next 3 helical transmembrane spans lie at 18 to 38 (LFGVTFALRWYALAYIAGLLI), 67 to 87 (LLTWVILGVILGGRLGFVLFY), and 105 to 125 (GGMSFHGGFLGVMTALVAFCL). Position 150 (R150) interacts with a 1,2-diacyl-sn-glycero-3-phospho-(1'-sn-glycerol). The next 3 membrane-spanning stretches (helical) occupy residues 193–213 (QIYEAGLEGILLFTVLSLLVW), 222–242 (GSVSGMFLAGYGATRFLVEFV), and 266–286 (GLTMGQILSLPMILLGLYLIL).

This sequence belongs to the Lgt family.

The protein resides in the cell inner membrane. It catalyses the reaction L-cysteinyl-[prolipoprotein] + a 1,2-diacyl-sn-glycero-3-phospho-(1'-sn-glycerol) = an S-1,2-diacyl-sn-glyceryl-L-cysteinyl-[prolipoprotein] + sn-glycerol 1-phosphate + H(+). The protein operates within protein modification; lipoprotein biosynthesis (diacylglyceryl transfer). Its function is as follows. Catalyzes the transfer of the diacylglyceryl group from phosphatidylglycerol to the sulfhydryl group of the N-terminal cysteine of a prolipoprotein, the first step in the formation of mature lipoproteins. The protein is Phosphatidylglycerol--prolipoprotein diacylglyceryl transferase of Cereibacter sphaeroides (strain ATCC 17023 / DSM 158 / JCM 6121 / CCUG 31486 / LMG 2827 / NBRC 12203 / NCIMB 8253 / ATH 2.4.1.) (Rhodobacter sphaeroides).